Here is a 1220-residue protein sequence, read N- to C-terminus: ATP-dependent helicase/deoxyribonuclease subunit B (1220 aa).

The UvrD-like helicase ATP-binding domain maps to 1–281 (MSMRFIVGRA…VFLTETHRFE (281 aa)). Residue 8–15 (GRAGTGKS) participates in ATP binding. In terms of domain architecture, UvrD-like helicase C-terminal spans 283-590 (AGLKHLERFY…LVGSLDRSRN (308 aa)). Cysteine 788 is a binding site for [4Fe-4S] cluster. The interval 989–1008 (LAEGSKGSEGSEGSEDSEDS) is disordered. Cysteine 1128, cysteine 1131, and cysteine 1137 together coordinate [4Fe-4S] cluster. Positions 1162–1171 (RVQSQDSEQY) are enriched in polar residues. A disordered region spans residues 1162–1220 (RVQSQDSEQYPEQHPPTSVPGETSRRALQKDGGNSPRGQELIWLGEDEAGAGKEDDGHE). Positions 1211 to 1220 (GAGKEDDGHE) are enriched in basic and acidic residues.

Belongs to the helicase family. AddB/RexB type 1 subfamily. In terms of assembly, heterodimer of AddA and AddB. The cofactor is Mg(2+). It depends on [4Fe-4S] cluster as a cofactor.

In terms of biological role, the heterodimer acts as both an ATP-dependent DNA helicase and an ATP-dependent, dual-direction single-stranded exonuclease. Recognizes the chi site generating a DNA molecule suitable for the initiation of homologous recombination. The AddB subunit has 5' -&gt; 3' nuclease activity but not helicase activity. This chain is ATP-dependent helicase/deoxyribonuclease subunit B, found in Desulfitobacterium hafniense (strain Y51).